Here is a 161-residue protein sequence, read N- to C-terminus: MAGALCPGSFDPVTNGHLDVFTRAAAQFDEVVVTVMINPNKKGMFDVEERMELLRETTAHLPNVRVASWRGLLVDFAREQGITAIVKGLRDATDFGYELQMAQMNKKLSGVDTFFIATNPAFSFLSSSLVKEVATYGGDVSDMLPPVVHKRLLDRIAERRG.

Ser9 is a substrate binding site. ATP contacts are provided by residues 9–10 and His17; that span reads SF. 3 residues coordinate substrate: Lys41, Leu73, and Lys87. Residues 88 to 90, Glu98, and 122 to 128 each bind ATP; these read GLR and FSFLSSS.

The protein belongs to the bacterial CoaD family. As to quaternary structure, homohexamer. Mg(2+) serves as cofactor.

The protein resides in the cytoplasm. The enzyme catalyses (R)-4'-phosphopantetheine + ATP + H(+) = 3'-dephospho-CoA + diphosphate. Its pathway is cofactor biosynthesis; coenzyme A biosynthesis; CoA from (R)-pantothenate: step 4/5. Its function is as follows. Reversibly transfers an adenylyl group from ATP to 4'-phosphopantetheine, yielding dephospho-CoA (dPCoA) and pyrophosphate. In Nocardia farcinica (strain IFM 10152), this protein is Phosphopantetheine adenylyltransferase.